We begin with the raw amino-acid sequence, 763 residues long: Xaa-Pro dipeptidyl-peptidase (763 aa).

Active-site charge relay system residues include Ser-348, Asp-468, and His-498.

The protein belongs to the peptidase S15 family. As to quaternary structure, homodimer.

The protein localises to the cytoplasm. It catalyses the reaction Hydrolyzes Xaa-Pro-|- bonds to release unblocked, N-terminal dipeptides from substrates including Ala-Pro-|-p-nitroanilide and (sequentially) Tyr-Pro-|-Phe-Pro-|-Gly-Pro-|-Ile.. Functionally, removes N-terminal dipeptides sequentially from polypeptides having unsubstituted N-termini provided that the penultimate residue is proline. This chain is Xaa-Pro dipeptidyl-peptidase (pepX), found in Lactococcus lactis subsp. lactis (strain IL1403) (Streptococcus lactis).